A 340-amino-acid polypeptide reads, in one-letter code: Phosphate acyltransferase (340 aa).

This sequence belongs to the PlsX family. As to quaternary structure, homodimer. Probably interacts with PlsY.

The protein resides in the cytoplasm. The catalysed reaction is a fatty acyl-[ACP] + phosphate = an acyl phosphate + holo-[ACP]. Its pathway is lipid metabolism; phospholipid metabolism. Catalyzes the reversible formation of acyl-phosphate (acyl-PO(4)) from acyl-[acyl-carrier-protein] (acyl-ACP). This enzyme utilizes acyl-ACP as fatty acyl donor, but not acyl-CoA. This is Phosphate acyltransferase from Leptospira biflexa serovar Patoc (strain Patoc 1 / ATCC 23582 / Paris).